Here is a 460-residue protein sequence, read N- to C-terminus: MALQDILSVSDLNRYIKLVLEKEPHLQDIWVRGEISNFTHHSSGHMYFTLKDKQSRIKVVMFASYNRFLRFLPKDGAKAIVRGSISAYERDGAYQFYAKEMQPDGLGSLYLAFEQLKEKLAQEGLFAAERKRMLPRFPKRVGVVTSPTGAAIRDICTTIRRRYPQAEIVLSPAVVQGADAPASIVSAIRIMNDQPDIDVLIVGRGGGSIEELWAFNDENVARAIATSLIPVISAVGHETDVTIADFVADVRAATPTAAAELAVPHYLEWVERVRQLEIRMHRAVRGTMTEQRNRLTRLGNSYAMRQPERRLEEAAERLDRAHLRMRQSMKHLLDRRRERYTRLDEQIKRYRLADQIGEKRKNLSKLRATLDERMLGRLNQKRMAFAARIATLEALSPLKVMQRGFSLVYTNDRLVKSVEQFAPGDEIMVRLSDGSATARVEKVNREEEKQSGSQKNGTRD.

The segment at 438-460 (ARVEKVNREEEKQSGSQKNGTRD) is disordered. Residues 439–450 (RVEKVNREEEKQ) are compositionally biased toward basic and acidic residues. Residues 451–460 (SGSQKNGTRD) are compositionally biased toward polar residues.

It belongs to the XseA family. Heterooligomer composed of large and small subunits.

It localises to the cytoplasm. It catalyses the reaction Exonucleolytic cleavage in either 5'- to 3'- or 3'- to 5'-direction to yield nucleoside 5'-phosphates.. In terms of biological role, bidirectionally degrades single-stranded DNA into large acid-insoluble oligonucleotides, which are then degraded further into small acid-soluble oligonucleotides. This chain is Exodeoxyribonuclease 7 large subunit, found in Brevibacillus brevis (strain 47 / JCM 6285 / NBRC 100599).